The following is a 320-amino-acid chain: Cytochrome f (320 aa).

An N-terminal signal peptide occupies residues 1 to 35; that stretch reads MEKRNTYDWVTRWVIASFSILTISYMITWTSISNA. Residues tyrosine 36, cysteine 56, cysteine 59, and histidine 60 each contribute to the heme site. Residues 286–306 form a helical membrane-spanning segment; that stretch reads IQGLLVFLASVVLAQIFLVLK.

Belongs to the cytochrome f family. In terms of assembly, the 4 large subunits of the cytochrome b6-f complex are cytochrome b6, subunit IV (17 kDa polypeptide, petD), cytochrome f and the Rieske protein, while the 4 small subunits are PetG, PetL, PetM and PetN. The complex functions as a dimer. It depends on heme as a cofactor.

The protein localises to the plastid. Its subcellular location is the chloroplast thylakoid membrane. Component of the cytochrome b6-f complex, which mediates electron transfer between photosystem II (PSII) and photosystem I (PSI), cyclic electron flow around PSI, and state transitions. The polypeptide is Cytochrome f (Welwitschia mirabilis (Tree tumbo)).